We begin with the raw amino-acid sequence, 212 residues long: V-type ATP synthase subunit E (212 aa).

The protein belongs to the V-ATPase E subunit family.

Produces ATP from ADP in the presence of a proton gradient across the membrane. The chain is V-type ATP synthase subunit E from Nitrosococcus oceani (strain ATCC 19707 / BCRC 17464 / JCM 30415 / NCIMB 11848 / C-107).